The following is an 87-amino-acid chain: NADH-ubiquinone oxidoreductase chain 4L (87 aa).

3 helical membrane passes run 1–21 (MNLS…NRKN), 22–42 (IILM…LVLI), and 57–77 (LYII…LVAF).

The protein belongs to the complex I subunit 4L family. As to quaternary structure, core subunit of respiratory chain NADH dehydrogenase (Complex I) which is composed of 45 different subunits.

Its subcellular location is the mitochondrion inner membrane. It catalyses the reaction a ubiquinone + NADH + 5 H(+)(in) = a ubiquinol + NAD(+) + 4 H(+)(out). Functionally, core subunit of the mitochondrial membrane respiratory chain NADH dehydrogenase (Complex I) which catalyzes electron transfer from NADH through the respiratory chain, using ubiquinone as an electron acceptor. The polypeptide is NADH-ubiquinone oxidoreductase chain 4L (ND4L) (Moniliophthora perniciosa (strain FA553 / isolate CP02) (Witches'-broom disease fungus)).